Here is a 198-residue protein sequence, read N- to C-terminus: Chitin synthase 2 (198 aa).

It belongs to the chitin synthase family. Class III subfamily.

It localises to the cell membrane. The enzyme catalyses [(1-&gt;4)-N-acetyl-beta-D-glucosaminyl](n) + UDP-N-acetyl-alpha-D-glucosamine = [(1-&gt;4)-N-acetyl-beta-D-glucosaminyl](n+1) + UDP + H(+). Polymerizes chitin, a structural polymer of the cell wall and septum, by transferring the sugar moiety of UDP-GlcNAc to the non-reducing end of the growing chitin polymer. This chain is Chitin synthase 2 (CHS2), found in Rhinocladiella atrovirens.